A 250-amino-acid polypeptide reads, in one-letter code: MEKGPVRAPAEKPRGARCSNGFPERDPPRPGPSRPAEKPPRPEAKSAQPADGWKGERPRSEEDNELNLPNLAAAYSSILSSLGENPQRQGLLKTPWRAASAMQFFTKGYQETISDVLNDAIFDEDHDEMVIVKDIDMFSMCEHHLVPFVGKVHIGYLPNKQVLGLSKLARIVEIYSRRLQVQERLTKQIAVAITEALRPAGVGVVVEATHMCMVMRGVQKMNSKTVTSTMLGVFREDPKTREEFLTLIRS.

2 stretches are compositionally biased toward basic and acidic residues: residues 1–14 (MEKG…EKPR) and 35–44 (PAEKPPRPEA). The interval 1-64 (MEKGPVRAPA…GERPRSEEDN (64 aa)) is disordered. A phosphoserine mark is found at S60 and S81. C141, H144, and C212 together coordinate Zn(2+).

This sequence belongs to the GTP cyclohydrolase I family. Toroid-shaped homodecamer, composed of a dimer of pentamers. The inactive isoforms also form decamers and may possibly be incorporated into GCH1 heterodecamers, decreasing enzyme stability and activity. Interacts with AHSA1 and GCHFR/GFRP. Phosphorylated by casein kinase II at Ser-81 in HAECs during oscillatory shear stress; phosphorylation at Ser-81 results in increased enzyme activity. In terms of tissue distribution, in epidermis, expressed predominantly in basal undifferentiated keratinocytes and in some but not all melanocytes (at protein level).

The protein localises to the cytoplasm. It localises to the nucleus. It catalyses the reaction GTP + H2O = 7,8-dihydroneopterin 3'-triphosphate + formate + H(+). Its pathway is cofactor biosynthesis; 7,8-dihydroneopterin triphosphate biosynthesis; 7,8-dihydroneopterin triphosphate from GTP: step 1/1. Its activity is regulated as follows. GTP shows a positive allosteric effect, and tetrahydrobiopterin inhibits the enzyme activity. Zinc is required for catalytic activity. Inhibited by Mg(2+). Positively regulates nitric oxide synthesis in umbilical vein endothelial cells (HUVECs). May be involved in dopamine synthesis. May modify pain sensitivity and persistence. Isoform GCH-1 is the functional enzyme, the potential function of the enzymatically inactive isoforms remains unknown. In Homo sapiens (Human), this protein is GTP cyclohydrolase 1 (GCH1).